A 278-amino-acid chain; its full sequence is Tetraspanin-13 (278 aa).

At 1 to 25 the chain is on the cytoplasmic side; that stretch reads MARDKEDQNNENPSIVQNMSFPFNT. A helical membrane pass occupies residues 26 to 46; that stretch reads IFLISSAIFLVTAAFWFVAVM. The Extracellular segment spans residues 47–62; sequence TLHYRTDECNRFVTTP. A helical transmembrane segment spans residues 63–83; the sequence is GIFISFSLLAMSLTGFYAAYF. Over 84–92 the chain is Cytoplasmic; sequence KSDCLFRIH. A helical membrane pass occupies residues 93-113; it reads FFIFFLWMFVVVSKAIFVIFL. Residues 114 to 249 lie on the Extracellular side of the membrane; it reads HKETNPRLFP…DVHNTSFSIT (136 aa). 3 N-linked (GlcNAc...) asparagine glycosylation sites follow: asparagine 202, asparagine 220, and asparagine 243. Residues 250 to 270 traverse the membrane as a helical segment; sequence VNIIHIIFSLCIGMTGWFAWL. Over 271-278 the chain is Cytoplasmic; it reads RILRESQK.

It belongs to the tetraspanin (TM4SF) family.

It is found in the membrane. May be involved in the regulation of cell differentiation. This is Tetraspanin-13 (TET13) from Arabidopsis thaliana (Mouse-ear cress).